Reading from the N-terminus, the 245-residue chain is 14-3-3 protein zeta/delta (245 aa).

M1 carries the post-translational modification N-acetylmethionine. K3 carries the post-translational modification N6-acetyllysine. The residue at position 58 (S58) is a Phosphoserine; by PKA. K68 is modified (N6-acetyllysine). S184, S207, and S210 each carry phosphoserine. Phosphothreonine; by CK1 is present on T232.

The protein belongs to the 14-3-3 family. As to quaternary structure, homodimer. Heterodimerizes with YWHAE. Homo- and heterodimerization is inhibited by phosphorylation on Ser-58. Interacts with FOXO4, NOXA1, SSH1 and ARHGEF2. Interacts with CDK16 and with WEE1 (C-terminal). Interacts with MLF1 (phosphorylated form); the interaction retains it in the cytoplasm. Interacts with BSPRY. Interacts with Thr-phosphorylated ITGB2. Interacts with Pseudomonas aeruginosa exoS (unphosphorylated form). Interacts with BAX; the interaction occurs in the cytoplasm. Under stress conditions, MAPK8-mediated phosphorylation releases BAX to mitochondria. Interacts with phosphorylated RAF1; the interaction is inhibited when YWHAZ is phosphorylated on Thr-232. Interacts with TP53; the interaction enhances p53 transcriptional activity. The Ser-58 phosphorylated form inhibits this interaction and p53 transcriptional activity. Interacts with ABL1 (phosphorylated form); the interaction retains ABL1 in the cytoplasm. Interacts with PKA-phosphorylated AANAT; the interaction modulates AANAT enzymatic activity by increasing affinity for arylalkylamines and acetyl-CoA and protecting the enzyme from dephosphorylation and proteasomal degradation. It may also prevent thiol-dependent inactivation. Interacts with AKT1; the interaction phosphorylates YWHAZ and modulates dimerization. Interacts with GAB2. Interacts with SAMSN1. Interacts with BCL2L11 and TLK2. Interacts with the 'Thr-369' phosphorylated form of DAPK2. Interacts with PI4KB, TBC1D22A and TBC1D22B. Interacts with ZFP36L1 (via phosphorylated form); this interaction occurs in a p38 MAPK- and AKT-signaling pathways. Interacts with SLITRK1. Interacts with AK5, LDB1, MADD, PDE1A and SMARCB1. Interacts with ARHGEF7 and GIT1. Interacts with MEFV. Interacts with ADAM22 (via C-terminus). The delta, brain-specific form differs from the zeta form in being phosphorylated. Phosphorylation on Ser-184 by MAPK8; promotes dissociation of BAX and translocation of BAX to mitochondria. Phosphorylation on Thr-232; inhibits binding of RAF1. Phosphorylated on Ser-58 by PKA and protein kinase C delta type catalytic subunit in a sphingosine-dependent fashion. Phosphorylation on Ser-58 by PKA; disrupts homodimerization and heterodimerization with YHAE and TP53.

The protein localises to the cytoplasm. Its subcellular location is the melanosome. Its function is as follows. Adapter protein implicated in the regulation of a large spectrum of both general and specialized signaling pathways. Binds to a large number of partners, usually by recognition of a phosphoserine or phosphothreonine motif. Binding generally results in the modulation of the activity of the binding partner. Promotes cytosolic retention and inactivation of TFEB transcription factor by binding to phosphorylated TFEB. Induces ARHGEF7 activity on RAC1 as well as lamellipodia and membrane ruffle formation. In neurons, regulates spine maturation through the modulation of ARHGEF7 activity. The chain is 14-3-3 protein zeta/delta (Ywhaz) from Mus musculus (Mouse).